Reading from the N-terminus, the 97-residue chain is MAKQTNKTASGTSTQHVKQQNAQASKNNFGTEFGSETNVQEVKQQNAQAAANKSQNAQASKNNFGTEFASETSAQEVRQQNAQAQAKKNQNSGKYQG.

Polar residues predominate over residues 1–42 (MAKQTNKTASGTSTQHVKQQNAQASKNNFGTEFGSETNVQEV). Positions 1–97 (MAKQTNKTAS…KNQNSGKYQG (97 aa)) are disordered. Repeats lie at residues 23 to 56 (QASKNNFGTEFGSETNVQEVKQQNAQAAANKSQN) and 58 to 91 (QASKNNFGTEFASETSAQEVRQQNAQAQAKKNQN). Low complexity predominate over residues 43-63 (KQQNAQAAANKSQNAQASKNN). Residues 69–78 (ASETSAQEVR) are compositionally biased toward polar residues. Residues 79-91 (QQNAQAQAKKNQN) show a composition bias toward low complexity.

The protein belongs to the gamma-type SASP family.

Its function is as follows. SASP are proteins degraded in the first minutes of spore germination and provide amino acids for both new protein synthesis and metabolism. These proteins may be involved in dormant spore's high resistance to UV light. This Priestia megaterium (Bacillus megaterium) protein is Small, acid-soluble spore protein gamma-type (sasP-B).